The sequence spans 267 residues: Heme-containing CO-sensing transcriptional regulator RcoM 2 (267 aa).

The 72-residue stretch at 15–86 (RAETFQHKLE…KSRDKLRFLL (72 aa)) folds into the PAS domain. Heme contacts are provided by His74 and Met104. In terms of domain architecture, HTH LytTR-type spans 161–266 (IPVYRKSRVI…TAQLKELLGV (106 aa)).

Heme serves as cofactor.

The protein localises to the cytoplasm. One-component, b-type heme-containing aerobic sensor and transcriptional regulator that responds to CO by activating the expression of the oxidation operon cox. The chain is Heme-containing CO-sensing transcriptional regulator RcoM 2 (rcoM2) from Paraburkholderia xenovorans (strain LB400).